A 909-amino-acid chain; its full sequence is ABC transporter B family member 1 (909 aa).

Positions 1-36 (MTKKNFNDEENESLLETYNKQQQKQSISTTNRSDQK) are disordered. A compositionally biased stretch (polar residues) spans 14–36 (LLETYNKQQQKQSISTTNRSDQK). The chain crosses the membrane as a helical span at residues 85-105 (LFIQIVSLVILAGYLISINAL). Low complexity predominate over residues 125–134 (TDSGSVSPTS). The tract at residues 125 to 147 (TDSGSVSPTSTPSPTPTPTPSPT) is disordered. Pro residues predominate over residues 135–145 (TPSPTPTPTPS). 8 helical membrane passes run 182 to 202 (FSTF…LLLI), 206 to 226 (SFIY…YNVI), 275 to 295 (IIIV…VLHI), 347 to 367 (LPII…SLAM), 392 to 412 (LALV…SWLF), 480 to 500 (VILL…IVPV), 572 to 592 (GVFS…IVYV), and 607 to 627 (LTSF…ISSL). The region spanning 350–633 (ILAAMVALVF…ISSLMTDFLK (284 aa)) is the ABC transmembrane type-1 domain. Positions 666–902 (IELKDVEFSY…TDGIYHNLVK (237 aa)) constitute an ABC transporter domain. 701–708 (GPSGGGKS) contacts ATP.

It belongs to the ABC transporter superfamily. ABCB family.

The protein localises to the membrane. This Dictyostelium discoideum (Social amoeba) protein is ABC transporter B family member 1 (abcB1).